A 174-amino-acid chain; its full sequence is Large ribosomal subunit protein uL10 (174 aa).

Belongs to the universal ribosomal protein uL10 family. As to quaternary structure, part of the ribosomal stalk of the 50S ribosomal subunit. The N-terminus interacts with L11 and the large rRNA to form the base of the stalk. The C-terminus forms an elongated spine to which L12 dimers bind in a sequential fashion forming a multimeric L10(L12)X complex.

Its function is as follows. Forms part of the ribosomal stalk, playing a central role in the interaction of the ribosome with GTP-bound translation factors. This Rubrobacter xylanophilus (strain DSM 9941 / JCM 11954 / NBRC 16129 / PRD-1) protein is Large ribosomal subunit protein uL10.